The sequence spans 161 residues: Nucleotide-binding protein Bcep18194_A5887 (161 aa).

Belongs to the YajQ family.

Functionally, nucleotide-binding protein. In Burkholderia lata (strain ATCC 17760 / DSM 23089 / LMG 22485 / NCIMB 9086 / R18194 / 383), this protein is Nucleotide-binding protein Bcep18194_A5887.